A 93-amino-acid chain; its full sequence is Protein NONRESPONDING TO OXYLIPINS 2, mitochondrial (93 aa).

The transit peptide at 1–27 (MASRCRSLSKPAFSAFRSAMNKPSIRP) directs the protein to the mitochondrion.

As to expression, expressed in cotyledons, roots and flowers.

It is found in the mitochondrion. Functionally, essential for mitochondrial morphology, functionality and distribution. Contributes to 9-lipoxygenase (9-LOX)-derived oxylipin synthesis, but not to brassinosteroids (BRs) signaling. Required for waving-inducing oxylipin 9-hydroxyoctadecatrienoic acid and derivatives (e.g. 9-HOT, 2-HOE, 13-HOT, 13-HOD, 13-KOD, 12,13-KHOD, 9-HOT, 9-HOD, 9-KOT, 9-KOD and 9,10-KHOE)-mediated root development regulation, including callose deposition, root waving and lateral roots formation. Involved in basal plant defense toward pathogenic bacteria (e.g. Pseudomonas syringae pv tomato), both in compatible (e.g. Pst DC3000) and incompatible (e.g. Pst DC3000 avrRPM1) interactions, as well as against obligate biotrophic pathogenic fungi (e.g. Golovinomyces cichoracearum), probably via the promotion of callose deposition in the cell wall. Confers sensitivity to the herbicide isoxaben, a herbicide inhibiting cellulose synthesis and altering the cell wall. This Arabidopsis thaliana (Mouse-ear cress) protein is Protein NONRESPONDING TO OXYLIPINS 2, mitochondrial.